Reading from the N-terminus, the 391-residue chain is Aspartate carbamoyltransferase 3, chloroplastic (391 aa).

A chloroplast-targeting transit peptide spans 1–69 (MTASSSLFSC…SKCDKMIKTR (69 aa)). The carbamoyl phosphate site is built by Arg-137 and Thr-138. The UMP site is built by Arg-137 and Thr-138. Residue Lys-167 participates in L-aspartate binding. Arg-188, His-216, and Gln-219 together coordinate carbamoyl phosphate. Arg-188 and His-216 together coordinate UMP. Arg-249 and Arg-311 together coordinate UMP. Arg-249 and Arg-311 together coordinate L-aspartate. Leu-351 and Pro-352 together coordinate carbamoyl phosphate.

This sequence belongs to the aspartate/ornithine carbamoyltransferase superfamily. ATCase family. Homotrimer.

The protein resides in the plastid. It localises to the chloroplast. The catalysed reaction is carbamoyl phosphate + L-aspartate = N-carbamoyl-L-aspartate + phosphate + H(+). It participates in pyrimidine metabolism; UMP biosynthesis via de novo pathway; (S)-dihydroorotate from bicarbonate: step 2/3. Its activity is regulated as follows. Feedback inhibited by UMP. Functionally, catalyzes the condensation of carbamoyl phosphate and aspartate to form carbamoyl aspartate and inorganic phosphate, the committed step in the de novo pyrimidine nucleotide biosynthesis pathway. The sequence is that of Aspartate carbamoyltransferase 3, chloroplastic (PYRB3) from Pisum sativum (Garden pea).